A 365-amino-acid polypeptide reads, in one-letter code: Putative agmatine deiminase (365 aa).

Cysteine 356 serves as the catalytic Amidino-cysteine intermediate.

The protein belongs to the agmatine deiminase family.

The catalysed reaction is agmatine + H2O = N-carbamoylputrescine + NH4(+). This Latilactobacillus sakei subsp. sakei (strain 23K) (Lactobacillus sakei subsp. sakei) protein is Putative agmatine deiminase.